The primary structure comprises 357 residues: Ribosomal RNA large subunit methyltransferase M (357 aa).

S-adenosyl-L-methionine is bound by residues serine 183, 216-219, aspartate 235, aspartate 255, and aspartate 271; that span reads APGG. Catalysis depends on lysine 300, which acts as the Proton acceptor.

It belongs to the class I-like SAM-binding methyltransferase superfamily. RNA methyltransferase RlmE family. RlmM subfamily. In terms of assembly, monomer.

It is found in the cytoplasm. It carries out the reaction cytidine(2498) in 23S rRNA + S-adenosyl-L-methionine = 2'-O-methylcytidine(2498) in 23S rRNA + S-adenosyl-L-homocysteine + H(+). Its function is as follows. Catalyzes the 2'-O-methylation at nucleotide C2498 in 23S rRNA. In Pseudomonas syringae pv. tomato (strain ATCC BAA-871 / DC3000), this protein is Ribosomal RNA large subunit methyltransferase M.